We begin with the raw amino-acid sequence, 369 residues long: tRNA/tmRNA (uracil-C(5))-methyltransferase (369 aa).

Residues Gln190, Tyr218, Asn223, Glu239, and Asp301 each coordinate S-adenosyl-L-methionine. Cys326 functions as the Nucleophile in the catalytic mechanism. Glu360 acts as the Proton acceptor in catalysis.

It belongs to the class I-like SAM-binding methyltransferase superfamily. RNA M5U methyltransferase family. TrmA subfamily.

It carries out the reaction uridine(54) in tRNA + S-adenosyl-L-methionine = 5-methyluridine(54) in tRNA + S-adenosyl-L-homocysteine + H(+). The enzyme catalyses uridine(341) in tmRNA + S-adenosyl-L-methionine = 5-methyluridine(341) in tmRNA + S-adenosyl-L-homocysteine + H(+). Its function is as follows. Dual-specificity methyltransferase that catalyzes the formation of 5-methyluridine at position 54 (m5U54) in all tRNAs, and that of position 341 (m5U341) in tmRNA (transfer-mRNA). This is tRNA/tmRNA (uracil-C(5))-methyltransferase from Vibrio vulnificus (strain YJ016).